Consider the following 331-residue polypeptide: Ribosomal large subunit pseudouridine synthase D (331 aa).

An S4 RNA-binding domain is found at 25–97; that stretch reads RRFDAVLAEL…IPLNVLYEDD (73 aa). D145 is a catalytic residue.

The protein belongs to the pseudouridine synthase RluA family.

It localises to the cytoplasm. The enzyme catalyses uridine(1911/1915/1917) in 23S rRNA = pseudouridine(1911/1915/1917) in 23S rRNA. Functionally, responsible for synthesis of pseudouridine from uracil at positions 1911, 1915 and 1917 in 23S ribosomal RNA. The polypeptide is Ribosomal large subunit pseudouridine synthase D (rluD) (Xanthomonas campestris pv. campestris (strain ATCC 33913 / DSM 3586 / NCPPB 528 / LMG 568 / P 25)).